A 361-amino-acid chain; its full sequence is NudC domain-containing protein 3 (361 aa).

Residues 87–97 are compositionally biased toward basic and acidic residues; the sequence is KIRRKEEEEAK. Residues 87-106 are disordered; it reads KIRRKEEEEAKTVSAAAAEK. Ser-146 carries the phosphoserine modification. The region spanning 185 to 277 is the CS domain; that stretch reads AVRENYTWSQ…VGEYWWNAIL (93 aa). Phosphoserine is present on residues Ser-340 and Ser-355.

The protein is NudC domain-containing protein 3 (NUDCD3) of Pongo abelii (Sumatran orangutan).